The chain runs to 142 residues: Putative pre-16S rRNA nuclease (142 aa).

It belongs to the YqgF nuclease family.

Its subcellular location is the cytoplasm. Its function is as follows. Could be a nuclease involved in processing of the 5'-end of pre-16S rRNA. This chain is Putative pre-16S rRNA nuclease, found in Azotobacter vinelandii (strain DJ / ATCC BAA-1303).